Consider the following 556-residue polypeptide: Glutamine--tRNA ligase (556 aa).

The 'HIGH' region signature appears at 34–44 (PEPNGYLHIGH). ATP contacts are provided by residues 35 to 37 (EPN) and 41 to 47 (HIGHAKS). 2 residues coordinate L-glutamine: Asp-67 and Tyr-212. Residues Thr-231, 263–264 (RL), and 271–273 (MSK) each bind ATP. Positions 270–274 (VMSKR) match the 'KMSKS' region motif.

Belongs to the class-I aminoacyl-tRNA synthetase family. As to quaternary structure, monomer.

Its subcellular location is the cytoplasm. The enzyme catalyses tRNA(Gln) + L-glutamine + ATP = L-glutaminyl-tRNA(Gln) + AMP + diphosphate. The chain is Glutamine--tRNA ligase from Nitrosomonas europaea (strain ATCC 19718 / CIP 103999 / KCTC 2705 / NBRC 14298).